Reading from the N-terminus, the 287-residue chain is Pyridoxal 5'-phosphate synthase subunit PdxS (287 aa).

Position 21 (aspartate 21) interacts with D-ribose 5-phosphate. The Schiff-base intermediate with D-ribose 5-phosphate role is filled by lysine 78. Glycine 150 serves as a coordination point for D-ribose 5-phosphate. Residue arginine 162 coordinates D-glyceraldehyde 3-phosphate. Residues glycine 211 and 232-233 (GS) each bind D-ribose 5-phosphate.

The protein belongs to the PdxS/SNZ family. As to quaternary structure, in the presence of PdxT, forms a dodecamer of heterodimers.

It catalyses the reaction aldehydo-D-ribose 5-phosphate + D-glyceraldehyde 3-phosphate + L-glutamine = pyridoxal 5'-phosphate + L-glutamate + phosphate + 3 H2O + H(+). The protein operates within cofactor biosynthesis; pyridoxal 5'-phosphate biosynthesis. Catalyzes the formation of pyridoxal 5'-phosphate from ribose 5-phosphate (RBP), glyceraldehyde 3-phosphate (G3P) and ammonia. The ammonia is provided by the PdxT subunit. Can also use ribulose 5-phosphate and dihydroxyacetone phosphate as substrates, resulting from enzyme-catalyzed isomerization of RBP and G3P, respectively. The chain is Pyridoxal 5'-phosphate synthase subunit PdxS from Tropheryma whipplei (strain Twist) (Whipple's bacillus).